The following is a 449-amino-acid chain: Putative tartrate transporter (449 aa).

The next 11 membrane-spanning stretches (helical) occupy residues 34 to 54, 64 to 84, 99 to 119, 130 to 150, 156 to 176, 194 to 214, 259 to 279, 292 to 312, 336 to 356, 367 to 387, and 414 to 434; these read IVPF…NIGF, GFSS…YFLF, IWIA…AFVQ, LLGV…SFWF, AAVT…GSPI, WMFL…LFFL, VIAL…LGIW, IEVG…MVLW, GLAF…LTIV, LWSM…IATI, and GGLY…LILA.

Belongs to the major facilitator superfamily. Phthalate permease family.

The protein resides in the cell membrane. Its function is as follows. Component of the tartrate utilization system and may allow entry of tartrate and tartrate dehydrogenase. This chain is Putative tartrate transporter (ttuB), found in Agrobacterium vitis (Rhizobium vitis).